The sequence spans 122 residues: Large ribosomal subunit protein uL14 (122 aa).

The protein belongs to the universal ribosomal protein uL14 family. Part of the 50S ribosomal subunit. Forms a cluster with proteins L3 and L19. In the 70S ribosome, L14 and L19 interact and together make contacts with the 16S rRNA in bridges B5 and B8.

Binds to 23S rRNA. Forms part of two intersubunit bridges in the 70S ribosome. This chain is Large ribosomal subunit protein uL14, found in Neisseria gonorrhoeae (strain ATCC 700825 / FA 1090).